Here is a 299-residue protein sequence, read N- to C-terminus: Tyrosine recombinase XerC (299 aa).

The Core-binding (CB) domain occupies 1–81 (MDEAIRRFIE…SWRQFYHWLQ (81 aa)). One can recognise a Tyr recombinase domain in the interval 102-281 (LLPKALPVDG…DFQHLAKVYD (180 aa)). Active-site residues include Arg142, Lys166, His233, Arg236, and His259. The O-(3'-phospho-DNA)-tyrosine intermediate role is filled by Tyr268.

It belongs to the 'phage' integrase family. XerC subfamily. Forms a cyclic heterotetrameric complex composed of two molecules of XerC and two molecules of XerD.

The protein localises to the cytoplasm. In terms of biological role, site-specific tyrosine recombinase, which acts by catalyzing the cutting and rejoining of the recombining DNA molecules. The XerC-XerD complex is essential to convert dimers of the bacterial chromosome into monomers to permit their segregation at cell division. It also contributes to the segregational stability of plasmids. This is Tyrosine recombinase XerC from Chromobacterium violaceum (strain ATCC 12472 / DSM 30191 / JCM 1249 / CCUG 213 / NBRC 12614 / NCIMB 9131 / NCTC 9757 / MK).